The following is a 242-amino-acid chain: Small ribosomal subunit protein uS5 (242 aa).

Residues 1–14 (MADENSTGPGNQPE) show a composition bias toward polar residues. The interval 1–65 (MADENSTGPG…DRRPRDEDGG (65 aa)) is disordered. A compositionally biased stretch (basic and acidic residues) spans 41 to 65 (DGGRGGRDGGRGRRDDRRPRDEDGG). The S5 DRBM domain occupies 68–131 (LIEKLVHINR…AAAKKAMIRV (64 aa)). A disordered region spans residues 204-242 (EQTSPKSVAQRRGKKVSDLIKRGGASDRAAEAEAAAVTE). Basic and acidic residues predominate over residues 218-234 (KVSDLIKRGGASDRAAE).

The protein belongs to the universal ribosomal protein uS5 family. In terms of assembly, part of the 30S ribosomal subunit. Contacts proteins S4 and S8.

In terms of biological role, with S4 and S12 plays an important role in translational accuracy. Its function is as follows. Located at the back of the 30S subunit body where it stabilizes the conformation of the head with respect to the body. This chain is Small ribosomal subunit protein uS5, found in Sphingopyxis alaskensis (strain DSM 13593 / LMG 18877 / RB2256) (Sphingomonas alaskensis).